The primary structure comprises 443 residues: tRNA-2-methylthio-N(6)-dimethylallyladenosine synthase (443 aa).

In terms of domain architecture, MTTase N-terminal spans 3-120; sequence SKLYIKTFGC…LPELIDARRR (118 aa). C12, C49, C83, C157, C161, and C164 together coordinate [4Fe-4S] cluster. Positions 143 to 377 constitute a Radical SAM core domain; the sequence is RTTGATAFVS…KIQRNAQMIS (235 aa). Residues 378–441 enclose the TRAM domain; it reads QSMVDTIQRV…SHTLRGEISD (64 aa).

It belongs to the methylthiotransferase family. MiaB subfamily. As to quaternary structure, monomer. It depends on [4Fe-4S] cluster as a cofactor.

Its subcellular location is the cytoplasm. It carries out the reaction N(6)-dimethylallyladenosine(37) in tRNA + (sulfur carrier)-SH + AH2 + 2 S-adenosyl-L-methionine = 2-methylsulfanyl-N(6)-dimethylallyladenosine(37) in tRNA + (sulfur carrier)-H + 5'-deoxyadenosine + L-methionine + A + S-adenosyl-L-homocysteine + 2 H(+). Functionally, catalyzes the methylthiolation of N6-(dimethylallyl)adenosine (i(6)A), leading to the formation of 2-methylthio-N6-(dimethylallyl)adenosine (ms(2)i(6)A) at position 37 in tRNAs that read codons beginning with uridine. The chain is tRNA-2-methylthio-N(6)-dimethylallyladenosine synthase from Nitrosomonas eutropha (strain DSM 101675 / C91 / Nm57).